The chain runs to 48 residues: uncharacterized protein (48 aa).

The tract at residues 1-48 (MLFCNNNNNNNNNNNNNNNNNNNNNNNNNNNNNNNNNNNSSNNNNFSR) is disordered.

This is an uncharacterized protein from Dictyostelium discoideum (Social amoeba).